The primary structure comprises 120 residues: MFLLYEYDIFWAFLIISSAIPFLAFLISGVLSPIRKGPEKLSSYESGIEPIGDAWLQFRIRYYMFALVFVVFDVETVFLYPWAMSFDVLGVSAFIEAFVFVLILILGLVYAWRKGALEWS.

Helical transmembrane passes span isoleucine 9 to glycine 29, methionine 64 to methionine 84, and valine 88 to leucine 108.

It belongs to the complex I subunit 3 family. NDH is composed of at least 16 different subunits, 5 of which are encoded in the nucleus.

It is found in the plastid. It localises to the chloroplast thylakoid membrane. It carries out the reaction a plastoquinone + NADH + (n+1) H(+)(in) = a plastoquinol + NAD(+) + n H(+)(out). The catalysed reaction is a plastoquinone + NADPH + (n+1) H(+)(in) = a plastoquinol + NADP(+) + n H(+)(out). NDH shuttles electrons from NAD(P)H:plastoquinone, via FMN and iron-sulfur (Fe-S) centers, to quinones in the photosynthetic chain and possibly in a chloroplast respiratory chain. The immediate electron acceptor for the enzyme in this species is believed to be plastoquinone. Couples the redox reaction to proton translocation, and thus conserves the redox energy in a proton gradient. This Aethionema grandiflorum (Persian stone-cress) protein is NAD(P)H-quinone oxidoreductase subunit 3, chloroplastic.